A 429-amino-acid chain; its full sequence is tRNA modification GTPase MnmE (429 aa).

Residues Arg-20, Glu-77, and Arg-117 each contribute to the (6S)-5-formyl-5,6,7,8-tetrahydrofolate site. Positions 213-353 (GFEVAILGAP…LVKAVSHRLS (141 aa)) constitute a TrmE-type G domain. K(+) is bound at residue Asn-223. Residues 223-228 (NVGKSS), 242-248 (SSIAGTT), and 267-270 (DTAG) contribute to the GTP site. Ser-227 is a Mg(2+) binding site. The K(+) site is built by Ser-242, Ile-244, and Thr-247. Thr-248 is a Mg(2+) binding site. Lys-429 lines the (6S)-5-formyl-5,6,7,8-tetrahydrofolate pocket.

Belongs to the TRAFAC class TrmE-Era-EngA-EngB-Septin-like GTPase superfamily. TrmE GTPase family. As to quaternary structure, homodimer. Heterotetramer of two MnmE and two MnmG subunits. The cofactor is K(+).

It localises to the cytoplasm. Functionally, exhibits a very high intrinsic GTPase hydrolysis rate. Involved in the addition of a carboxymethylaminomethyl (cmnm) group at the wobble position (U34) of certain tRNAs, forming tRNA-cmnm(5)s(2)U34. The protein is tRNA modification GTPase MnmE of Dinoroseobacter shibae (strain DSM 16493 / NCIMB 14021 / DFL 12).